Reading from the N-terminus, the 178-residue chain is Translation initiation factor IF-3 (178 aa).

It belongs to the IF-3 family. Monomer.

The protein localises to the cytoplasm. Functionally, IF-3 binds to the 30S ribosomal subunit and shifts the equilibrium between 70S ribosomes and their 50S and 30S subunits in favor of the free subunits, thus enhancing the availability of 30S subunits on which protein synthesis initiation begins. The sequence is that of Translation initiation factor IF-3 from Ralstonia nicotianae (strain ATCC BAA-1114 / GMI1000) (Ralstonia solanacearum).